We begin with the raw amino-acid sequence, 270 residues long: Release factor glutamine methyltransferase (270 aa).

S-adenosyl-L-methionine contacts are provided by residues 112–116 (GTGSG), D135, W162, and N178. Substrate is bound at residue 178 to 181 (NPPY).

Belongs to the protein N5-glutamine methyltransferase family. PrmC subfamily.

The catalysed reaction is L-glutaminyl-[peptide chain release factor] + S-adenosyl-L-methionine = N(5)-methyl-L-glutaminyl-[peptide chain release factor] + S-adenosyl-L-homocysteine + H(+). Functionally, methylates the class 1 translation termination release factors RF1/PrfA and RF2/PrfB on the glutamine residue of the universally conserved GGQ motif. The protein is Release factor glutamine methyltransferase of Bordetella pertussis (strain Tohama I / ATCC BAA-589 / NCTC 13251).